Consider the following 745-residue polypeptide: Chitin synthase D (745 aa).

Helical transmembrane passes span 26-46 (LAHR…PVHL), 55-75 (VLML…IPWL), 412-432 (TTAL…SSIN), 434-454 (LPVG…FYLG), and 464-484 (LFPL…VYGI). Disordered stretches follow at residues 613–635 (TGDN…SLHQ) and 672–745 (ILPH…ESMV). The span at 707–720 (NASTRGSMEGNTPE) shows a compositional bias: polar residues.

It belongs to the chitin synthase family. Class VI subfamily.

The protein localises to the cell membrane. The catalysed reaction is [(1-&gt;4)-N-acetyl-beta-D-glucosaminyl](n) + UDP-N-acetyl-alpha-D-glucosamine = [(1-&gt;4)-N-acetyl-beta-D-glucosaminyl](n+1) + UDP + H(+). Polymerizes chitin, a structural polymer of the cell wall and septum, by transferring the sugar moiety of UDP-GlcNAc to the non-reducing end of the growing chitin polymer. The chain is Chitin synthase D (chsD) from Aspergillus fumigatus (strain ATCC MYA-4609 / CBS 101355 / FGSC A1100 / Af293) (Neosartorya fumigata).